Reading from the N-terminus, the 268-residue chain is Ribosomal RNA large subunit methyltransferase E (268 aa).

5 residues coordinate S-adenosyl-L-methionine: G50, W52, D68, D84, and D109. K149 serves as the catalytic Proton acceptor. The region spanning 196-254 is the TRAM domain; that stretch reads PLRKGDKFVVDIEKLGSSGDGAVLIEGFVVFVKEVEVGEKVRIKISDVKPNFAFADVEE.

The protein belongs to the class I-like SAM-binding methyltransferase superfamily. RNA methyltransferase RlmE family.

The protein localises to the cytoplasm. It catalyses the reaction uridine(2552) in 23S rRNA + S-adenosyl-L-methionine = 2'-O-methyluridine(2552) in 23S rRNA + S-adenosyl-L-homocysteine + H(+). In terms of biological role, specifically methylates the uridine in position 2552 of 23S rRNA at the 2'-O position of the ribose in the fully assembled 50S ribosomal subunit. The protein is Ribosomal RNA large subunit methyltransferase E of Methanosarcina mazei (strain ATCC BAA-159 / DSM 3647 / Goe1 / Go1 / JCM 11833 / OCM 88) (Methanosarcina frisia).